The primary structure comprises 88 residues: MAPKKKWSKGKVKDKAQHATVFDKSIIDRINKEVPAFKFISVSVLVDRMKINGSLARIAIRDLAERGVIQKVDQHSKQAIYTRAAASA.

The protein belongs to the eukaryotic ribosomal protein eS25 family. As to quaternary structure, component of the small ribosomal subunit (SSU). Mature yeast ribosomes consist of a small (40S) and a large (60S) subunit. The 40S small subunit contains 1 molecule of ribosomal RNA (18S rRNA) and at least 33 different proteins. The large 60S subunit contains 3 rRNA molecules (25S, 5.8S and 5S rRNA) and at least 46 different proteins.

It is found in the cytoplasm. In terms of biological role, component of the ribosome, a large ribonucleoprotein complex responsible for the synthesis of proteins in the cell. The small ribosomal subunit (SSU) binds messenger RNAs (mRNAs) and translates the encoded message by selecting cognate aminoacyl-transfer RNA (tRNA) molecules. The large subunit (LSU) contains the ribosomal catalytic site termed the peptidyl transferase center (PTC), which catalyzes the formation of peptide bonds, thereby polymerizing the amino acids delivered by tRNAs into a polypeptide chain. The nascent polypeptides leave the ribosome through a tunnel in the LSU and interact with protein factors that function in enzymatic processing, targeting, and the membrane insertion of nascent chains at the exit of the ribosomal tunnel. In Schizosaccharomyces pombe (strain 972 / ATCC 24843) (Fission yeast), this protein is Small ribosomal subunit protein eS25B (rps2501).